Consider the following 313-residue polypeptide: E3 ubiquitin-protein ligase RNF126 (313 aa).

Ala2 carries the post-translational modification N-acetylalanine. At Ser5 the chain carries Phosphoserine. The tract at residues 5-101 is required for interaction with BAG6; that stretch reads SPQPGRYFCH…FEIPTFPPGA (97 aa). Residues Cys13, Cys16, Cys29, and Cys32 each coordinate Zn(2+). A C4-type zinc finger spans residues 13-32; sequence CHCCSVEIVPRLPDYICPRC. Disordered stretches follow at residues 42 to 64 and 96 to 128; these read EETRSAENGSAPSTASADQSRQQ and TFPPGAQADDSRDPESRREREQHSRHRYGARQP. Polar residues predominate over residues 47-64; the sequence is AENGSAPSTASADQSRQQ. The span at 104-117 shows a compositional bias: basic and acidic residues; it reads DDSRDPESRREREQ. The segment covering 118–128 has biased composition (basic residues); the sequence is HSRHRYGARQP. Positions 203–306 are sufficient for interaction with AICDA; sequence TGPPPADKEK…SSSSSSSPGN (104 aa). The segment at 232–273 adopts an RING-type zinc-finger fold; that stretch reads CPVCKDDYGLGEHVRQLPCNHLFHDGCIVPWLEQHDSCPVCR. A disordered region spans residues 280-313; it reads NTATDPPGLAGVSFSSSSSSSSSSPGNENPASSS. Positions 292-313 are enriched in low complexity; that stretch reads SFSSSSSSSSSSPGNENPASSS.

As to quaternary structure, interacts with CCDC50, EGFR, FLT3 and SCAMP3. Interacts with BAG6 (via ubiquitin-like domain); required for BAG6-dependent ubiquitination of proteins mislocalized to the cytosol. Interacts with CDKN1A. Interacts with AICDA. Post-translationally, ubiquitinated. May undergo autoubiquitination.

It localises to the cytoplasm. Its subcellular location is the nucleus. It catalyses the reaction S-ubiquitinyl-[E2 ubiquitin-conjugating enzyme]-L-cysteine + [acceptor protein]-L-lysine = [E2 ubiquitin-conjugating enzyme]-L-cysteine + N(6)-ubiquitinyl-[acceptor protein]-L-lysine.. Its pathway is protein modification; protein ubiquitination. Its function is as follows. E3 ubiquitin-protein ligase that mediates ubiquitination oF target proteins. Depending on the associated E2 ligase, mediates 'Lys-27'-, 'Lys-29'-, 'Lys-48'- and/or 'Lys-63'-linked polyubiquitination of substrates. Part of a BAG6-dependent quality control process ensuring that proteins of the secretory pathway that are mislocalized to the cytosol are degraded by the proteasome. Probably acts by providing the ubiquitin ligase activity associated with the BAG6 complex and be responsible for ubiquitination of the hydrophobic mislocalized proteins and their targeting to the proteasome. May also play a role in the endosomal recycling of IGF2R, the cation-independent mannose-6-phosphate receptor. May play a role in the endosomal sorting and degradation of several membrane receptors including EGFR, FLT3, MET and CXCR4, by mediating their ubiquitination. By ubiquitinating CDKN1A/p21 and targeting it for degradation, may also promote cell proliferation. May monoubiquitinate AICDA. Acts as a regulator of DNA repair by mediating 'Lys-27'- and 'Lys-29'-linked polyubiquitination of MRE11, thereby promoting the exonuclease activity of MRE11. This is E3 ubiquitin-protein ligase RNF126 from Bos taurus (Bovine).